Reading from the N-terminus, the 201-residue chain is Phospholipase A2 inhibitor NAI (201 aa).

The first 19 residues, 1 to 19 (MKSLQIICLLFVLVARGSC), serve as a signal peptide directing secretion. 8 cysteine pairs are disulfide-bonded: C22–C47, C25–C32, C40–C68, C74–C95, C96–C101, C119–C144, C137–C166, and C170–C191. A glycan (N-linked (GlcNAc...) asparagine) is linked at N176.

This sequence belongs to the CNF-like-inhibitor family. In terms of assembly, heterotrimer of 2 subunits A and 1 subunit B; non-covalently linked. In terms of processing, N-glycosylated, probably by biantennary structure. Glycosylation does not change PLA2 inhibitory activity. In terms of tissue distribution, expressed by the liver.

It is found in the secreted. In terms of biological role, inhibits the enzymatic activity of all phospholipase A2 tested, binding them with micromole to nanomole affinity. The polypeptide is Phospholipase A2 inhibitor NAI (Notechis ater (Black tiger snake)).